Consider the following 131-residue polypeptide: Histone H3-like 4 (131 aa).

Lys10 carries the post-translational modification N6,N6,N6-trimethyllysine; alternate. Lys10 is subject to N6,N6-dimethyllysine; alternate. Lys10 carries the post-translational modification N6-acetyllysine; alternate. The residue at position 10 (Lys10) is an N6-methyllysine; alternate. Thr12 bears the Phosphothreonine mark. At Lys15 the chain carries N6-acetyllysine. Ser27 carries the post-translational modification Phosphoserine. At Lys32 the chain carries N6,N6,N6-trimethyllysine; alternate. Lys32 bears the N6,N6-dimethyllysine; alternate mark. Lys32 carries the N6-methyllysine; alternate modification.

Belongs to the histone H3 family. The nucleosome is a histone octamer containing two molecules each of H2A, H2B, H3 and H4 assembled in one H3-H4 heterotetramer and two H2A-H2B heterodimers. The octamer wraps approximately 147 bp of DNA. As to expression, expressed in roots, seedlings, leaves buds and open flowers.

Its subcellular location is the nucleus. The protein localises to the chromosome. Its function is as follows. Core component of nucleosome. Nucleosomes wrap and compact DNA into chromatin, limiting DNA accessibility to the cellular machineries which require DNA as a template. Histones thereby play a central role in transcription regulation, DNA repair, DNA replication and chromosomal stability. DNA accessibility is regulated via a complex set of post-translational modifications of histones, also called histone code, and nucleosome remodeling. The sequence is that of Histone H3-like 4 from Arabidopsis thaliana (Mouse-ear cress).